Consider the following 276-residue polypeptide: Diaminopimelate epimerase (276 aa).

The substrate site is built by asparagine 13, glutamine 46, and asparagine 66. Cysteine 75 functions as the Proton donor in the catalytic mechanism. Residues glycine 76–asparagine 77, asparagine 159, asparagine 192, and glutamate 210–arginine 211 each bind substrate. Cysteine 219 (proton acceptor) is an active-site residue. Glycine 220–serine 221 provides a ligand contact to substrate.

The protein belongs to the diaminopimelate epimerase family. In terms of assembly, homodimer.

The protein localises to the cytoplasm. The enzyme catalyses (2S,6S)-2,6-diaminopimelate = meso-2,6-diaminopimelate. The protein operates within amino-acid biosynthesis; L-lysine biosynthesis via DAP pathway; DL-2,6-diaminopimelate from LL-2,6-diaminopimelate: step 1/1. Catalyzes the stereoinversion of LL-2,6-diaminopimelate (L,L-DAP) to meso-diaminopimelate (meso-DAP), a precursor of L-lysine and an essential component of the bacterial peptidoglycan. The polypeptide is Diaminopimelate epimerase (Aliivibrio fischeri (strain ATCC 700601 / ES114) (Vibrio fischeri)).